The following is a 222-amino-acid chain: Sugar fermentation stimulation protein homolog (222 aa).

The protein belongs to the SfsA family.

In Thermoplasma acidophilum (strain ATCC 25905 / DSM 1728 / JCM 9062 / NBRC 15155 / AMRC-C165), this protein is Sugar fermentation stimulation protein homolog.